Reading from the N-terminus, the 1316-residue chain is Tetratricopeptide repeat protein 21B (1316 aa).

TPR repeat units follow at residues 108-141 (EKAL…SDGS), 145-178 (HVLK…GNDT), 180-211 (ALLG…FPSF), 285-323 (AQLF…NPQQ), 324-357 (SEFA…DETS), 492-525 (LQTV…NPSY), 563-596 (PLYH…PGMK), 617-650 (LSIF…FSGT), 722-755 (PRSF…NPKD), 757-789 (TLAS…GQKN), 791-822 (LCYD…EPVN), 831-864 (GRCQ…QARV), 884-917 (AEIC…CETD), 919-951 (KIML…DQDN), 952-985 (EAAT…KPDN), 1023-1056 (PGFQ…RDWG), 1197-1230 (EKSW…NRSC), 1232-1264 (KAYE…SNRT), and 1266-1299 (PAVG…HPTY).

It belongs to the TTC21 family. As to quaternary structure, component of the IFT complex A (IFT-A) complex. IFT-A complex is divided into a core subcomplex composed of IFT122:IFT140:WDR19 which is associated with TULP3 and a peripheral subcomplex composed of IFT43:WDR35:TTC21B. Interacts directy with WDR35 and TTC21B. Interacts with TTC25.

The protein localises to the cytoplasm. It is found in the cytoskeleton. Its subcellular location is the cilium axoneme. In terms of biological role, component of the IFT complex A (IFT-A), a complex required for retrograde ciliary transport and entry into cilia of G protein-coupled receptors (GPCRs). Essential for retrograde trafficking of IFT-1, IFT-B and GPCRs. Negatively modulates the SHH signal transduction. This is Tetratricopeptide repeat protein 21B from Homo sapiens (Human).